The primary structure comprises 533 residues: Aspartic proteinase sxa1 (533 aa).

Positions 1 to 23 (MKASFFVFAISALQALQASVASA) are cleaved as a signal peptide. The 359-residue stretch at 76–434 (YFANLTLGSN…DWDAQKIGLA (359 aa)) folds into the Peptidase A1 domain. Asn-79 carries an N-linked (GlcNAc...) asparagine glycan. Residue Asp-94 is part of the active site. 8 N-linked (GlcNAc...) asparagine glycosylation sites follow: Asn-106, Asn-138, Asn-153, Asn-166, Asn-271, Asn-278, Asn-299, and Asn-319. Asp-325 is an active-site residue. Asn-439 carries N-linked (GlcNAc...) asparagine glycosylation.

Belongs to the peptidase A1 family.

Involved in degradation or processing of the mating pheromones. Its loss may cause a persistent response to the pheromones. It may cleave the mating pheromone M-factor. May be involved in processing of zymogens that are required for zygote formation. This Schizosaccharomyces pombe (strain 972 / ATCC 24843) (Fission yeast) protein is Aspartic proteinase sxa1 (sxa1).